The sequence spans 410 residues: MKEELLKRFTKYVKVDTQSNEESTVCPTTKGQMELANILVTELKEIGMQEVTVDEFGYVMATLPSNTTKEVPVIGFLAHLDTATDLTGKNVQPQVHENYDGKDIVLNKELNVVLSPKQFPELAQYKGKTLITTDGTTLLGADDKAGITEIMVAMNYLINHPEIKHGKIRIAFTPDEEIGRGPERFDVEAFGAKYAYTMDGGPLGELEYESFNAAAAKITFNGNSVHPGTAKNKMVNAVKMAMEFDARIPKEEAPEHTDGYEGFYHLISLNGDVEQAKSYYIIRDFDHLKFVERKTHIATVAKELEEKYGKGSVELKLNDQYYNMREKIEPVKEIVDIVSAAMRNLDIEPKISPIRGGTDGAQLSYKGLPTPNIFGGGENFHGKFEYVALESMVKATEVIIEVARLFEEKE.

Position 79 (H79) interacts with Zn(2+). Residue D81 is part of the active site. D142 is a Zn(2+) binding site. The active-site Proton acceptor is E176. 3 residues coordinate Zn(2+): E177, D199, and H381.

This sequence belongs to the peptidase M20B family. It depends on Zn(2+) as a cofactor.

It localises to the cytoplasm. The catalysed reaction is Release of the N-terminal residue from a tripeptide.. Cleaves the N-terminal amino acid of tripeptides. The protein is Peptidase T of Listeria welshimeri serovar 6b (strain ATCC 35897 / DSM 20650 / CCUG 15529 / CIP 8149 / NCTC 11857 / SLCC 5334 / V8).